Consider the following 150-residue polypeptide: Large ribosomal subunit protein bL9 (150 aa).

This sequence belongs to the bacterial ribosomal protein bL9 family.

Its function is as follows. Binds to the 23S rRNA. The polypeptide is Large ribosomal subunit protein bL9 (Photobacterium profundum (strain SS9)).